The chain runs to 421 residues: MNNDEYLTALGQNAKQASYALATLSGQQKSALLRCIANKLTAAKDDIVAANQQDVADAKANGLSDAMIDRLLLDETRLMGVISDIDNVIGLTDPVGCEIDSRLLDNGLRLSRRRVPLGVIGVIYEARPNVTVDIAVLALKTGNAVILRGGKETLSSNKALCKVIRSAMVEQGLSEDCVQLIDNPDRALVSGLLKLDKYVDMIVPRGGQNLQRLCAEQATIPVILGGIGICHIYVDAAANLEKAVAVIENAKVQRPTVCNALDTVLVHASHAKAFIPVLAKHLSGLGVKFYGCEQTQAILGAEKIEVSAADDESYSTEWLSLTLGLKVVADLESAVEHIRTFSSGHSESILTDNIHTASEFMNAVDSAAVYVNASTRFTDGGEFGLGAEVAVSTQKLHARGPMGLEALTTYKWLAWGDYTVR.

This sequence belongs to the gamma-glutamyl phosphate reductase family.

It is found in the cytoplasm. It carries out the reaction L-glutamate 5-semialdehyde + phosphate + NADP(+) = L-glutamyl 5-phosphate + NADPH + H(+). It participates in amino-acid biosynthesis; L-proline biosynthesis; L-glutamate 5-semialdehyde from L-glutamate: step 2/2. Its function is as follows. Catalyzes the NADPH-dependent reduction of L-glutamate 5-phosphate into L-glutamate 5-semialdehyde and phosphate. The product spontaneously undergoes cyclization to form 1-pyrroline-5-carboxylate. In Shewanella pealeana (strain ATCC 700345 / ANG-SQ1), this protein is Gamma-glutamyl phosphate reductase.